Consider the following 971-residue polypeptide: UPF0182 protein CMS1887 (971 aa).

7 helical membrane-spanning segments follow: residues 16-36, 56-76, 108-128, 161-181, 205-225, 255-275, and 281-301; these read LAITAAIIAALVIAFFIFAGF, WGAGIALFFIGFLAMAIPVFV, LAMFAIPAVFGLFAGVSASSG, FYHAVVGFASAVVIISMLGVL, IQIAITAGVYFLLQGVSIWLD, TILAGIAVVVAVMFIITAAIG, and IIGTAGLIVASILIGTAYPAI. Polar residues predominate over residues 687–702; sequence QDLWTTPNDPTATTEA. Disordered stretches follow at residues 687–706 and 874–924; these read QDLWTTPNDPTATTEAGTPA and GATA…AQDV. Low complexity-rich tracts occupy residues 884–900 and 907–921; these read PTTPADGAAGDGSTDGA and STPTPAPTASPAAPA.

It belongs to the UPF0182 family.

Its subcellular location is the cell membrane. The sequence is that of UPF0182 protein CMS1887 from Clavibacter sepedonicus (Clavibacter michiganensis subsp. sepedonicus).